The sequence spans 131 residues: Histone H2A type 1-A (131 aa).

The disordered stretch occupies residues 1-23; it reads MSGRGKQGGKARAKSKSRSSRAG. Ser2 is modified (N-acetylserine). A Phosphoserine; by RPS6KA5 modification is found at Ser2. The residue at position 4 (Arg4) is a Citrulline; alternate. Position 4 is a symmetric dimethylarginine; by PRMT5; alternate (Arg4). N6-(2-hydroxyisobutyryl)lysine is present on Lys6. The segment covering 7–19 has biased composition (basic residues); the sequence is QGGKARAKSKSRS. Position 10 is an N6-(2-hydroxyisobutyryl)lysine; alternate (Lys10). Residue Lys10 is modified to N6-(beta-hydroxybutyryl)lysine; alternate. Position 10 is an N6-lactoyllysine; alternate (Lys10). N6-succinyllysine; alternate is present on Lys10. Position 14 is an N6-(beta-hydroxybutyryl)lysine (Lys14). Glycyl lysine isopeptide (Lys-Gly) (interchain with G-Cter in ubiquitin) cross-links involve residues Lys14 and Lys16. Residue Lys37 is modified to N6-(2-hydroxyisobutyryl)lysine; alternate. N6-(beta-hydroxybutyryl)lysine; alternate is present on Lys37. N6-crotonyllysine; alternate is present on Lys37. An N6-(2-hydroxyisobutyryl)lysine mark is found at Lys75 and Lys76. Lys96 bears the N6-(2-hydroxyisobutyryl)lysine; alternate mark. Lys96 is modified (N6-(beta-hydroxybutyryl)lysine; alternate). Lys96 bears the N6-succinyllysine; alternate mark. An N6-glutaryllysine; alternate modification is found at Lys96. Gln105 carries the post-translational modification N5-methylglutamine. Lys119 is modified (N6-(2-hydroxyisobutyryl)lysine; alternate). Lys119 is modified (N6-(beta-hydroxybutyryl)lysine; alternate). Lys119 and Lys120 each carry N6-crotonyllysine; alternate. Residues Lys119 and Lys120 each carry the N6-glutaryllysine; alternate modification. Residue Lys120 forms a Glycyl lysine isopeptide (Lys-Gly) (interchain with G-Cter in ubiquitin); alternate linkage. Thr121 bears the Phosphothreonine; by DCAF1 mark. Lys127 bears the N6-crotonyllysine mark.

The protein belongs to the histone H2A family. The nucleosome is a histone octamer containing two molecules each of H2A, H2B, H3 and H4 assembled in one H3-H4 heterotetramer and two H2A-H2B heterodimers. The octamer wraps approximately 147 bp of DNA. Post-translationally, deiminated on Arg-4 in granulocytes upon calcium entry. In terms of processing, monoubiquitination of Lys-120 (H2AK119Ub) by RING1, TRIM37 and RNF2/RING2 complex gives a specific tag for epigenetic transcriptional repression and participates in X chromosome inactivation of female mammals. It is involved in the initiation of both imprinted and random X inactivation. Ubiquitinated H2A is enriched in inactive X chromosome chromatin. Ubiquitination of H2A functions downstream of methylation of 'Lys-27' of histone H3 (H3K27me). H2AK119Ub by RNF2/RING2 can also be induced by ultraviolet and may be involved in DNA repair. Monoubiquitination of Lys-120 (H2AK119Ub) by TRIM37 may promote transformation of cells in a number of breast cancers. Following DNA double-strand breaks (DSBs), it is ubiquitinated through 'Lys-63' linkage of ubiquitin moieties by the E2 ligase UBE2N and the E3 ligases RNF8 and RNF168, leading to the recruitment of repair proteins to sites of DNA damage. Ubiquitination at Lys-14 and Lys-16 (H2AK13Ub and H2AK15Ub, respectively) in response to DNA damage is initiated by RNF168 that mediates monoubiquitination at these 2 sites, and 'Lys-63'-linked ubiquitin are then conjugated to monoubiquitin; RNF8 is able to extend 'Lys-63'-linked ubiquitin chains in vitro. Deubiquitinated by USP51 at Lys-14 and Lys-16 (H2AK13Ub and H2AK15Ub, respectively) after damaged DNA is repaired. H2AK119Ub and ionizing radiation-induced 'Lys-63'-linked ubiquitination (H2AK13Ub and H2AK15Ub) are distinct events. Phosphorylation on Ser-2 (H2AS1ph) is enhanced during mitosis. Phosphorylation on Ser-2 by RPS6KA5/MSK1 directly represses transcription. Acetylation of H3 inhibits Ser-2 phosphorylation by RPS6KA5/MSK1. Phosphorylation at Thr-121 (H2AT120ph) by DCAF1 is present in the regulatory region of many tumor suppresor genes and down-regulates their transcription. Post-translationally, glutamine methylation at Gln-105 (H2AQ104me) by FBL is specifically dedicated to polymerase I. It is present at 35S ribosomal DNA locus and impairs binding of the FACT complex. In terms of processing, symmetric dimethylation on Arg-4 by the PRDM1/PRMT5 complex may play a crucial role in the germ-cell lineage. Crotonylation (Kcr) is specifically present in male germ cells and marks testis-specific genes in post-meiotic cells, including X-linked genes that escape sex chromosome inactivation in haploid cells. Crotonylation marks active promoters and enhancers and confers resistance to transcriptional repressors. It is also associated with post-meiotically activated genes on autosomes. Post-translationally, lactylated in macrophages by EP300/P300 by using lactoyl-CoA directly derived from endogenous or exogenous lactate, leading to stimulates gene transcription.

Its subcellular location is the nucleus. It is found in the chromosome. In terms of biological role, core component of nucleosome. Nucleosomes wrap and compact DNA into chromatin, limiting DNA accessibility to the cellular machineries which require DNA as a template. Histones thereby play a central role in transcription regulation, DNA repair, DNA replication and chromosomal stability. DNA accessibility is regulated via a complex set of post-translational modifications of histones, also called histone code, and nucleosome remodeling. This is Histone H2A type 1-A from Homo sapiens (Human).